A 189-amino-acid polypeptide reads, in one-letter code: MIVILNNGGQYVHRIQRSLKYLGVPAKIVPNSTTLEEITVNPEIKGIILSGGPDITKATNCENIALNSEIPVLGICLGHQLISKAYGGHVSRADSEEYASIKIYVKEENDLFKGVPSEFTAWASHMDEVKVTPECFEILAYSDICGVESIKHKEKSLYGVQFHPEVSHTEYGDVLLKNFCKKCGFEFEE.

The region spanning 1–189 is the Glutamine amidotransferase type-1 domain; it reads MIVILNNGGQ…CKKCGFEFEE (189 aa). C76 (nucleophile) is an active-site residue. Active-site residues include H163 and E165.

Heterodimer composed of a glutamine amidotransferase subunit (A) and a GMP-binding subunit (B).

It catalyses the reaction XMP + L-glutamine + ATP + H2O = GMP + L-glutamate + AMP + diphosphate + 2 H(+). Its pathway is purine metabolism; GMP biosynthesis; GMP from XMP (L-Gln route): step 1/1. Functionally, catalyzes the synthesis of GMP from XMP. This Methanococcus maripaludis (strain C7 / ATCC BAA-1331) protein is GMP synthase [glutamine-hydrolyzing] subunit A.